Consider the following 469-residue polypeptide: Ribulose bisphosphate carboxylase large chain (469 aa).

The propeptide occupies 1–2 (MS). Proline 3 bears the N-acetylproline mark. An N6,N6,N6-trimethyllysine modification is found at lysine 14. Residues asparagine 123 and threonine 173 each contribute to the substrate site. Lysine 175 acts as the Proton acceptor in catalysis. Residue lysine 177 participates in substrate binding. Lysine 201, aspartate 203, and glutamate 204 together coordinate Mg(2+). An N6-carboxylysine modification is found at lysine 201. Catalysis depends on histidine 294, which acts as the Proton acceptor. Substrate is bound by residues arginine 295, histidine 327, and serine 379.

This sequence belongs to the RuBisCO large chain family. Type I subfamily. Heterohexadecamer of 8 large chains and 8 small chains; disulfide-linked. The disulfide link is formed within the large subunit homodimers. The cofactor is Mg(2+). The disulfide bond which can form in the large chain dimeric partners within the hexadecamer appears to be associated with oxidative stress and protein turnover.

It localises to the plastid. The protein localises to the chloroplast. It carries out the reaction 2 (2R)-3-phosphoglycerate + 2 H(+) = D-ribulose 1,5-bisphosphate + CO2 + H2O. The enzyme catalyses D-ribulose 1,5-bisphosphate + O2 = 2-phosphoglycolate + (2R)-3-phosphoglycerate + 2 H(+). In terms of biological role, ruBisCO catalyzes two reactions: the carboxylation of D-ribulose 1,5-bisphosphate, the primary event in carbon dioxide fixation, as well as the oxidative fragmentation of the pentose substrate in the photorespiration process. Both reactions occur simultaneously and in competition at the same active site. In Iris ensata (Japanese iris), this protein is Ribulose bisphosphate carboxylase large chain.